Reading from the N-terminus, the 337-residue chain is Ketol-acid reductoisomerase (NADP(+)) (337 aa).

Residues 1-180 (MQVYYDKDAD…GGTKGGVIET (180 aa)) form the KARI N-terminal Rossmann domain. NADP(+) contacts are provided by residues 24–27 (YGSQ), R47, and S51. Residue H106 is part of the active site. G132 provides a ligand contact to NADP(+). The region spanning 181–326 (TFREETETDL…AQLRAMMPWI (146 aa)) is the KARI C-terminal knotted domain. Mg(2+) contacts are provided by D189, E193, E225, and E229. Residue S250 participates in substrate binding.

The protein belongs to the ketol-acid reductoisomerase family. It depends on Mg(2+) as a cofactor.

It catalyses the reaction (2R)-2,3-dihydroxy-3-methylbutanoate + NADP(+) = (2S)-2-acetolactate + NADPH + H(+). The catalysed reaction is (2R,3R)-2,3-dihydroxy-3-methylpentanoate + NADP(+) = (S)-2-ethyl-2-hydroxy-3-oxobutanoate + NADPH + H(+). It participates in amino-acid biosynthesis; L-isoleucine biosynthesis; L-isoleucine from 2-oxobutanoate: step 2/4. Its pathway is amino-acid biosynthesis; L-valine biosynthesis; L-valine from pyruvate: step 2/4. Its function is as follows. Involved in the biosynthesis of branched-chain amino acids (BCAA). Catalyzes an alkyl-migration followed by a ketol-acid reduction of (S)-2-acetolactate (S2AL) to yield (R)-2,3-dihydroxy-isovalerate. In the isomerase reaction, S2AL is rearranged via a Mg-dependent methyl migration to produce 3-hydroxy-3-methyl-2-ketobutyrate (HMKB). In the reductase reaction, this 2-ketoacid undergoes a metal-dependent reduction by NADPH to yield (R)-2,3-dihydroxy-isovalerate. This chain is Ketol-acid reductoisomerase (NADP(+)), found in Neisseria meningitidis serogroup A / serotype 4A (strain DSM 15465 / Z2491).